We begin with the raw amino-acid sequence, 341 residues long: Thromboxane A2 receptor (341 aa).

Over 1-29 (MWPNGTSLGACFRPVNITLQERRAIASPW) the chain is Extracellular. 2 N-linked (GlcNAc...) asparagine glycosylation sites follow: Asn-4 and Asn-16. Residues 30-52 (FAASFCALGLGSNLLALSVLAGA) form a helical membrane-spanning segment. The Cytoplasmic segment spans residues 53-65 (RPGAGPRSSFLAL). Residues 66 to 86 (LCGLVLTDFLGLLVTGAIVAS) traverse the membrane as a helical segment. Residues 87 to 105 (QHAALLDWRATDPSCRLCY) lie on the Extracellular side of the membrane. A disulfide bridge connects residues Cys-104 and Cys-181. The helical transmembrane segment at 106-127 (FMGVAMVFFGLCPLLLGAAMAS) threads the bilayer. Residues 128-147 (ERFVGITRPFSRPTATSRRA) lie on the Cytoplasmic side of the membrane. Residues 148–170 (WATVGLVWVAAGALGLLPLLGLG) form a helical membrane-spanning segment. Topologically, residues 171 to 191 (RYSVQYPGSWCFLTLGTQRGD) are extracellular. Residues 192–217 (VVFGLIFALLGSASVGLSLLLNTVSV) form a helical membrane-spanning segment. The Cytoplasmic segment spans residues 218–244 (ATLCRVYHTREATQRPRDCEVEMMVQL). Residues 245–268 (VGIMVVATVCWMPLLVFIMQTLLQ) form a helical membrane-spanning segment. Over 269–287 (TPPVMSFSGQLLRATEHQL) the chain is Extracellular. The chain crosses the membrane as a helical span at residues 288 to 309 (LIYLRVATWNQILDPWVYILFR). The Cytoplasmic portion of the chain corresponds to 310-341 (RSVLRRLHPRFSSQLQAVSLRRPPAQAMLSGP). Phosphoserine is present on Ser-328.

This sequence belongs to the G-protein coupled receptor 1 family. As to quaternary structure, interacts with RPGRIP1L. Interacts with RACK1; the interaction regulates TBXA2R cell surface expression.

Its subcellular location is the cell membrane. Its function is as follows. Receptor for thromboxane A2 (TXA2), a potent stimulator of platelet aggregation. The activity of this receptor is mediated by a G-protein that activates a phosphatidylinositol-calcium second messenger system. In the kidney, the binding of TXA2 to glomerular TP receptors causes intense vasoconstriction. Activates phospholipase C and adenylyl cyclase. This chain is Thromboxane A2 receptor (Tbxa2r), found in Mus musculus (Mouse).